The following is an 887-amino-acid chain: Valine--tRNA ligase (887 aa).

A 'HIGH' region motif is present at residues 45–55; that stretch reads PNVTGILHMGH. The 'KMSKS' region motif lies at 528–532; it reads KMSKS. ATP is bound at residue K531. Residues 817–887 adopt a coiled-coil conformation; that stretch reads TGLLNNEAEI…LKESLKSFEE (71 aa).

Belongs to the class-I aminoacyl-tRNA synthetase family. ValS type 1 subfamily. In terms of assembly, monomer.

It localises to the cytoplasm. It catalyses the reaction tRNA(Val) + L-valine + ATP = L-valyl-tRNA(Val) + AMP + diphosphate. Its function is as follows. Catalyzes the attachment of valine to tRNA(Val). As ValRS can inadvertently accommodate and process structurally similar amino acids such as threonine, to avoid such errors, it has a 'posttransfer' editing activity that hydrolyzes mischarged Thr-tRNA(Val) in a tRNA-dependent manner. The polypeptide is Valine--tRNA ligase (Fusobacterium nucleatum subsp. nucleatum (strain ATCC 25586 / DSM 15643 / BCRC 10681 / CIP 101130 / JCM 8532 / KCTC 2640 / LMG 13131 / VPI 4355)).